Here is a 374-residue protein sequence, read N- to C-terminus: MRCELLDYELPEALIASRPPEERDGARLLLVDRGRRAGEVEHAAIRDLDRYIERGALVIVNDTKVVPARLFGRKRGTGGQVELFLLHRLDGAPAGAEDLGGGPQESAPRSERWRAMGRASKPIRPGSVLDIERDGALVAEVLERAEDGVLTVQLSSPAGLSVAAAIDAYGHVPLPPYLGRGDDASDRERYQTIFARVPGAVAAPTAGLHLSPGLVERLRANGVEIASVTLHVGLGTFQPVTVDDLDLHPMHAEVYSIPDATAGAIAGARARGAPVIAIGTTVVRALESAADPARAGLVQAQSGETRLLIQPGYRFRVVDALLTNFHLPRSTLLALVFAFAGRERTLLAYRAAIDAGYRFYSYGDAMLIRGVDAP.

It belongs to the QueA family. Monomer.

It is found in the cytoplasm. The enzyme catalyses 7-aminomethyl-7-carbaguanosine(34) in tRNA + S-adenosyl-L-methionine = epoxyqueuosine(34) in tRNA + adenine + L-methionine + 2 H(+). It functions in the pathway tRNA modification; tRNA-queuosine biosynthesis. Functionally, transfers and isomerizes the ribose moiety from AdoMet to the 7-aminomethyl group of 7-deazaguanine (preQ1-tRNA) to give epoxyqueuosine (oQ-tRNA). The protein is S-adenosylmethionine:tRNA ribosyltransferase-isomerase of Sorangium cellulosum (strain So ce56) (Polyangium cellulosum (strain So ce56)).